The primary structure comprises 252 residues: Orotidine 5'-phosphate decarboxylase (252 aa).

Substrate contacts are provided by residues D24, K46, 73 to 82, T137, R199, Q208, G228, and R229; that span reads DLKFHDIPNT. K75 acts as the Proton donor in catalysis.

Belongs to the OMP decarboxylase family. Type 1 subfamily. As to quaternary structure, homodimer.

The catalysed reaction is orotidine 5'-phosphate + H(+) = UMP + CO2. The protein operates within pyrimidine metabolism; UMP biosynthesis via de novo pathway; UMP from orotate: step 2/2. Catalyzes the decarboxylation of orotidine 5'-monophosphate (OMP) to uridine 5'-monophosphate (UMP). The chain is Orotidine 5'-phosphate decarboxylase from Moorella thermoacetica (strain ATCC 39073 / JCM 9320).